The following is a 411-amino-acid chain: S-inosyl-L-homocysteine hydrolase (411 aa).

Positions 121 and 146 each coordinate substrate. 147-149 (TTT) contacts NAD(+). Substrate contacts are provided by K176 and D180. NAD(+) is bound by residues N181, 210–215 (GYGWCG), E233, N268, 289–291 (SGH), and N335.

The protein belongs to the adenosylhomocysteinase family. The cofactor is NAD(+).

The protein localises to the cytoplasm. It catalyses the reaction S-inosyl-L-homocysteine + H2O = L-homocysteine + inosine. It functions in the pathway amino-acid biosynthesis; S-adenosyl-L-methionine biosynthesis. In terms of biological role, catalyzes the hydrolysis of S-inosyl-L-homocysteine (SIH) to L-homocysteine (Hcy) and inosine. Likely functions in a S-adenosyl-L-methionine (SAM) recycling pathway from S-adenosyl-L-homocysteine (SAH) produced from SAM-dependent methylation reactions. Can also catalyze the reverse reaction in vitro, i.e. the synthesis of SIH from Hcy and inosine. The protein is S-inosyl-L-homocysteine hydrolase of Methanosarcina mazei (strain ATCC BAA-159 / DSM 3647 / Goe1 / Go1 / JCM 11833 / OCM 88) (Methanosarcina frisia).